The sequence spans 137 residues: Large ribosomal subunit protein uL16 (137 aa).

This sequence belongs to the universal ribosomal protein uL16 family. As to quaternary structure, part of the 50S ribosomal subunit.

Its function is as follows. Binds 23S rRNA and is also seen to make contacts with the A and possibly P site tRNAs. The chain is Large ribosomal subunit protein uL16 from Rhizobium johnstonii (strain DSM 114642 / LMG 32736 / 3841) (Rhizobium leguminosarum bv. viciae).